Here is a 67-residue protein sequence, read N- to C-terminus: Pepsin B (67 aa).

The propeptide at 1–43 (MERIILRKGKSIREAMEEQGVLEKFLKNRPKIDPAAKYHFNND) is activation peptide.

Belongs to the peptidase A1 family.

Its subcellular location is the secreted. It carries out the reaction Degradation of gelatin, little activity on hemoglobin. Specificity on B chain of insulin more restricted than that of pepsin A. Does not cleave 1-Phe-|-Val-2, 4-Gln-|-His-5 or 23-Gly-|-Phe-24.. The protein is Pepsin B (PGB) of Sus scrofa (Pig).